Reading from the N-terminus, the 282-residue chain is Probable xyloglucan endotransglucosylase/hydrolase protein 18 (282 aa).

An N-terminal signal peptide occupies residues 1 to 26; it reads MKLSCGTSFAFLIMFLFAAQSMHVYA. The region spanning 27–218 is the GH16 domain; the sequence is GSFHKDVQIH…WSKAPFTAFY (192 aa). E104 (nucleophile) is an active-site residue. The active-site Proton donor is the E108. E108 provides a ligand contact to xyloglucan. Residue N112 is glycosylated (N-linked (GlcNAc...) asparagine). Xyloglucan contacts are provided by residues 121–123, 131–133, 197–198, and G202; these read HTN, DKE, and HW. The cysteines at positions 226 and 235 are disulfide-linked. A glycan (N-linked (GlcNAc...) asparagine) is linked at N238. Residues C267 and C281 are joined by a disulfide bond. R272 lines the xyloglucan pocket.

This sequence belongs to the glycosyl hydrolase 16 family. XTH group 2 subfamily. Contains at least one intrachain disulfide bond essential for its enzymatic activity. Root specific.

It localises to the secreted. The protein resides in the cell wall. Its subcellular location is the extracellular space. It is found in the apoplast. The catalysed reaction is breaks a beta-(1-&gt;4) bond in the backbone of a xyloglucan and transfers the xyloglucanyl segment on to O-4 of the non-reducing terminal glucose residue of an acceptor, which can be a xyloglucan or an oligosaccharide of xyloglucan.. Catalyzes xyloglucan endohydrolysis (XEH) and/or endotransglycosylation (XET). Cleaves and religates xyloglucan polymers, an essential constituent of the primary cell wall, and thereby participates in cell wall construction of growing tissues. This is Probable xyloglucan endotransglucosylase/hydrolase protein 18 (XTH18) from Arabidopsis thaliana (Mouse-ear cress).